The chain runs to 274 residues: SPbeta prophage-derived uncharacterized protein YomD (274 aa).

This chain is SPbeta prophage-derived uncharacterized protein YomD (yomD), found in Bacillus subtilis (strain 168).